Here is a 114-residue protein sequence, read N- to C-terminus: Gas vesicle protein J1 (114 aa).

Residues 13-22 form an alpha helix 1 region; the sequence is LAEMLEMLLD. Beta-strand stretches follow at residues 25–35 and 40–50; these read VVVNADIAVSV and LLGIELRAAIA. Residues 46–50 carry the Conserved in GvpM1/2 but not GvpA motif; the sequence is RAAIA. Alpha helix stretches follow at residues 52 to 72, 78 to 87, and 95 to 105; these read FETA…ERVE, SPDQSDPASE, and TNPLSDDSTPT. Positions 63-114 are disordered; the sequence is PTGTDMERVESAANISPDQSDPASETQSETESTNPLSDDSTPTASTSAEETK. Residues 75–98 are compositionally biased toward polar residues; that stretch reads ANISPDQSDPASETQSETESTNPL. Low complexity predominate over residues 99–114; sequence SDDSTPTASTSAEETK.

It belongs to the gas vesicle GvpA family. GvpF to GvpM interact with each other in vitro, and may form multi-subunit complex(es). Interacts with GvpA1.

The protein localises to the gas vesicle. Proteins GvpF to GvpM might be involved in nucleating gas vesicle formation. Mutagenesis of residues 13-61 shows that almost none of them can be substituted and still make gas vesicles. A minor component of the gas vesicle. Gas vesicles are hollow, gas filled proteinaceous nanostructures found in several microbial planktonic microorganisms. They allow positioning of halobacteria at the optimal depth for growth in the poorly aerated, shallow brine pools of their habitat. In terms of biological role, expression of a 9.5 kb p-vac DNA fragment containing 2 divergently transcribed regions (gvpD-gvpE-gvpF-gvpG-gvpH-gvpI-gvpJ-gvpK-gvpL-gvpM and gvpA-gvpC-gvpN-gvpO) allows H.volcanii to produce gas vesicles. All site-directed mutagenesis is tested in H.volcanii. A minimal gas vesicle can be made in H.volcanii by gvpA1-gvpO1 plus gvpF1-gvpG1-gvpJ1-gvpK1-gvpL1-gvpM1; lack of enough GvpJ1 prevents formation. A similar region restores gas vesicle production in H.halobium without the p-vac locus, but it still has the c-vac locus. This chain is Gas vesicle protein J1 (gvpJ11), found in Halobacterium salinarum (strain ATCC 700922 / JCM 11081 / NRC-1) (Halobacterium halobium).